The sequence spans 229 residues: Protein GrpE (229 aa).

A disordered region spans residues 1-89 (MSDFNKDDYL…AEGSSLTPLG (89 aa)). Residues 24–36 (ASPDADGADAPSD) are compositionally biased toward low complexity. Basic and acidic residues predominate over residues 39–50 (EQLKDDMLKDAA). Low complexity predominate over residues 65 to 84 (KAAAEATADAASDGDAEGSS).

Belongs to the GrpE family. Homodimer.

It localises to the cytoplasm. Functionally, participates actively in the response to hyperosmotic and heat shock by preventing the aggregation of stress-denatured proteins, in association with DnaK and GrpE. It is the nucleotide exchange factor for DnaK and may function as a thermosensor. Unfolded proteins bind initially to DnaJ; upon interaction with the DnaJ-bound protein, DnaK hydrolyzes its bound ATP, resulting in the formation of a stable complex. GrpE releases ADP from DnaK; ATP binding to DnaK triggers the release of the substrate protein, thus completing the reaction cycle. Several rounds of ATP-dependent interactions between DnaJ, DnaK and GrpE are required for fully efficient folding. The protein is Protein GrpE of Bifidobacterium animalis subsp. lactis (strain AD011).